A 281-amino-acid chain; its full sequence is MTDTPETLSGTECNGDRPPENGQQPSSQTRQETTDADETQAYYKVEPSLEDLPAKENQEETGNTKGNILPKGPEDEKILNENPEENLFVVHQAIKDLSLQEISAEDMAFREGHPWKKIPPNSSNLEVSRQKERTAQQQLEQRGDASTTEIEWLGFQKSRPVDILHSKCDEEEEEEEEVWNEEINEEDVDECAEEEDEVRVIEFKRKHREGSPLKEESLAREDSPLGSPGSQPGTPDEQPVFGKKGDIARNSYSRYNTISYRKIRKGNTKQRIDEFESMMHL.

3 stretches are compositionally biased toward polar residues: residues M1–E12, N21–Q31, and A135–T147. 3 disordered regions span residues M1–N80, R110–T147, and K167–A248. The span at D169–E197 shows a compositional bias: acidic residues. The segment covering V198 to S223 has biased composition (basic and acidic residues). Phosphoserine is present on residues S211, S223, S227, and S230. T234 carries the post-translational modification Phosphothreonine. The interval K262–L281 is binds actin.

As to quaternary structure, binds actin. As to expression, brain and spinal cord. Exclusively expressed by the oligodendrocytes. Appears at a late stage during myelination, and in the mature nerves, it is localized to the outer cytoplasmic lip of the myelin sheath and the paranodal loops.

The protein localises to the cytoplasm. The protein resides in the cytoskeleton. Its function is as follows. Plays a role in cytoskeletal rearrangements during the late wrapping and/or compaction phases of myelinogenesis as well as in maintenance and stability of myelin sheath in the adult. May play an important role in late-stage oligodendroglia maturation, myelin/Ranvier node formation during CNS development, and in the maintenance and plasticity of related structures in the mature CNS. This chain is Ermin (Ermn), found in Mus musculus (Mouse).